We begin with the raw amino-acid sequence, 113 residues long: Protein ZEO1 (113 aa).

Over residues 1 to 16 (MSEIQNKAETAAQDVQ) the composition is skewed to polar residues. Residues 1–96 (MSEIQNKAET…AVSEKKETKK (96 aa)) form a disordered region. Residue serine 2 is modified to N-acetylserine. Phosphoserine is present on serine 2. Residues 2–97 (SEIQNKAETA…VSEKKETKKE (96 aa)) adopt a coiled-coil conformation. Residues 17 to 37 (QKLEETKESLQNKGQEVKEQA) are compositionally biased toward basic and acidic residues. Glycyl lysine isopeptide (Lys-Gly) (interchain with G-Cter in ubiquitin) cross-links involve residues lysine 18 and lysine 23. Phosphoserine is present on serine 25. Glycyl lysine isopeptide (Lys-Gly) (interchain with G-Cter in ubiquitin) cross-links involve residues lysine 29 and lysine 34. The residue at position 40 (serine 40) is a Phosphoserine. A Glycyl lysine isopeptide (Lys-Gly) (interchain with G-Cter in ubiquitin) cross-link involves residue lysine 45. Residue threonine 49 is modified to Phosphothreonine. Residues 53 to 82 (EQVKKEEQNIADGVEQKKTEAANKVEETKK) show a composition bias toward basic and acidic residues. Residues lysine 57 and lysine 82 each participate in a glycyl lysine isopeptide (Lys-Gly) (interchain with G-Cter in ubiquitin) cross-link.

Interacts with MID2. In terms of processing, phosphorylation of Ser-25 is induced 2-fold in response to mating pheromone.

The protein resides in the cell membrane. Its function is as follows. Acts antagonistically to MID2 in signaling cell wall stress to the PKC1-MPK1 cell integrity pathway. The sequence is that of Protein ZEO1 (ZEO1) from Saccharomyces cerevisiae (strain ATCC 204508 / S288c) (Baker's yeast).